Here is an 804-residue protein sequence, read N- to C-terminus: Exo-1,4-beta-xylosidase xlnD (804 aa).

The N-terminal stretch at Met1–Ala26 is a signal peptide. N-linked (GlcNAc...) asparagine glycosylation is found at Asn29, Asn124, Asn148, Asn242, and Asn251. Asp315 is an active-site residue. N-linked (GlcNAc...) asparagine glycosylation is found at Asn357, Asn390, Asn413, Asn444, Asn455, Asn573, Asn665, Asn696, and Asn718.

The protein belongs to the glycosyl hydrolase 3 family.

It localises to the secreted. It catalyses the reaction Hydrolysis of (1-&gt;4)-beta-D-xylans, to remove successive D-xylose residues from the non-reducing termini.. It functions in the pathway glycan degradation; xylan degradation. In terms of biological role, xylan 1,4-beta-xylosidase involved in the hydrolysis of xylan, a major structural heterogeneous polysaccharide found in plant biomass representing the second most abundant polysaccharide in the biosphere, after cellulose. This is Exo-1,4-beta-xylosidase xlnD (xlnD) from Aspergillus awamori (Black koji mold).